A 741-amino-acid chain; its full sequence is Eukaryotic peptide chain release factor GTP-binding subunit (741 aa).

The several sort of repeats stretch occupies residues glutamine 5 to asparagine 135. Low complexity predominate over residues glutamine 59 to glutamine 161. Disordered regions lie at residues glutamine 59–leucine 186 and isoleucine 199–alanine 264. A charged region spans residues methionine 162 to aspartate 311. Composition is skewed to basic and acidic residues over residues aspartate 166–leucine 175 and lysine 202–valine 241. A tr-type G domain is found at lysine 316–arginine 541. Positions glycine 325–serine 332 are G1. Glycine 325–serine 332 provides a ligand contact to GTP. A G2 region spans residues glycine 381–glutamate 385. Phosphothreonine is present on threonine 399. The interval aspartate 402 to glycine 405 is G3. GTP contacts are provided by residues aspartate 402–histidine 406 and asparagine 464–aspartate 467. The interval asparagine 464–aspartate 467 is G4. The interval serine 505 to tyrosine 507 is G5.

The protein belongs to the TRAFAC class translation factor GTPase superfamily. Classic translation factor GTPase family. ERF3 subfamily.

The protein localises to the cytoplasm. In terms of biological role, involved in translation termination. Stimulates the activity of ERF1. Binds guanine nucleotides. In Ogataea pini (Yeast), this protein is Eukaryotic peptide chain release factor GTP-binding subunit (SUP2).